We begin with the raw amino-acid sequence, 707 residues long: Ribosomal RNA large subunit methyltransferase K/L (707 aa).

The region spanning 44–155 is the THUMP domain; the sequence is VIYNLCLWSR…NDILTVSFDL (112 aa).

Belongs to the methyltransferase superfamily. RlmKL family.

The protein localises to the cytoplasm. The enzyme catalyses guanosine(2445) in 23S rRNA + S-adenosyl-L-methionine = N(2)-methylguanosine(2445) in 23S rRNA + S-adenosyl-L-homocysteine + H(+). The catalysed reaction is guanosine(2069) in 23S rRNA + S-adenosyl-L-methionine = N(2)-methylguanosine(2069) in 23S rRNA + S-adenosyl-L-homocysteine + H(+). Specifically methylates the guanine in position 2445 (m2G2445) and the guanine in position 2069 (m7G2069) of 23S rRNA. In Legionella pneumophila (strain Corby), this protein is Ribosomal RNA large subunit methyltransferase K/L.